Reading from the N-terminus, the 309-residue chain is Methionyl-tRNA formyltransferase (309 aa).

110–113 (SLLP) serves as a coordination point for (6S)-5,6,7,8-tetrahydrofolate.

This sequence belongs to the Fmt family.

The catalysed reaction is L-methionyl-tRNA(fMet) + (6R)-10-formyltetrahydrofolate = N-formyl-L-methionyl-tRNA(fMet) + (6S)-5,6,7,8-tetrahydrofolate + H(+). In terms of biological role, attaches a formyl group to the free amino group of methionyl-tRNA(fMet). The formyl group appears to play a dual role in the initiator identity of N-formylmethionyl-tRNA by promoting its recognition by IF2 and preventing the misappropriation of this tRNA by the elongation apparatus. The protein is Methionyl-tRNA formyltransferase of Caldanaerobacter subterraneus subsp. tengcongensis (strain DSM 15242 / JCM 11007 / NBRC 100824 / MB4) (Thermoanaerobacter tengcongensis).